The sequence spans 404 residues: Argininosuccinate synthase (404 aa).

ATP contacts are provided by residues 12-20 (AYSGGLDTS) and Ala-39. 2 residues coordinate L-citrulline: Tyr-91 and Ser-96. Gly-121 is a binding site for ATP. Residues Thr-123, Asn-127, and Asp-128 each contribute to the L-aspartate site. An L-citrulline-binding site is contributed by Asn-127. L-citrulline contacts are provided by Arg-131, Ser-180, Ser-189, Glu-265, and Tyr-277.

The protein belongs to the argininosuccinate synthase family. Type 1 subfamily. As to quaternary structure, homotetramer.

The protein localises to the cytoplasm. The catalysed reaction is L-citrulline + L-aspartate + ATP = 2-(N(omega)-L-arginino)succinate + AMP + diphosphate + H(+). It functions in the pathway amino-acid biosynthesis; L-arginine biosynthesis; L-arginine from L-ornithine and carbamoyl phosphate: step 2/3. This chain is Argininosuccinate synthase, found in Vibrio campbellii (strain ATCC BAA-1116).